The primary structure comprises 511 residues: UDP-N-acetylmuramoyl-L-alanyl-D-glutamate--2,6-diaminopimelate ligase (511 aa).

Residue Ser-30 participates in UDP-N-acetyl-alpha-D-muramoyl-L-alanyl-D-glutamate binding. 110–116 (GTNGKTT) serves as a coordination point for ATP. Residues 152 to 153 (TT), Ser-179, Gln-185, and Arg-187 each bind UDP-N-acetyl-alpha-D-muramoyl-L-alanyl-D-glutamate. At Lys-219 the chain carries N6-carboxylysine. Residues Arg-385, 409 to 412 (DNPR), Gly-476, and Glu-480 each bind meso-2,6-diaminopimelate. A Meso-diaminopimelate recognition motif motif is present at residues 409 to 412 (DNPR).

Belongs to the MurCDEF family. MurE subfamily. The cofactor is Mg(2+). Carboxylation is probably crucial for Mg(2+) binding and, consequently, for the gamma-phosphate positioning of ATP.

It is found in the cytoplasm. It carries out the reaction UDP-N-acetyl-alpha-D-muramoyl-L-alanyl-D-glutamate + meso-2,6-diaminopimelate + ATP = UDP-N-acetyl-alpha-D-muramoyl-L-alanyl-gamma-D-glutamyl-meso-2,6-diaminopimelate + ADP + phosphate + H(+). It participates in cell wall biogenesis; peptidoglycan biosynthesis. Functionally, catalyzes the addition of meso-diaminopimelic acid to the nucleotide precursor UDP-N-acetylmuramoyl-L-alanyl-D-glutamate (UMAG) in the biosynthesis of bacterial cell-wall peptidoglycan. The protein is UDP-N-acetylmuramoyl-L-alanyl-D-glutamate--2,6-diaminopimelate ligase of Geobacter metallireducens (strain ATCC 53774 / DSM 7210 / GS-15).